The primary structure comprises 234 residues: Sugar fermentation stimulation protein A (234 aa).

A DNA-binding region (H-T-H motif) is located at residues 201 to 220 (LLSEAQQRGVEILAYKAELS).

This sequence belongs to the SfsA family.

In terms of biological role, binds to DNA non-specifically. Could be a regulatory factor involved in maltose metabolism. The polypeptide is Sugar fermentation stimulation protein A (Escherichia coli O7:K1 (strain IAI39 / ExPEC)).